The following is a 95-amino-acid chain: Defensin (95 aa).

The first 17 residues, 1-17, serve as a signal peptide directing secretion; sequence MKNYVFALLVVTAVAIA. Positions 18–55 are excised as a propeptide; that stretch reads LPNEDKNAPMRVHLLPQKEDESLKLEVTPVKEHHRTRR. Disulfide bonds link Cys58-Cys85, Cys71-Cys91, and Cys75-Cys93.

Belongs to the invertebrate defensin family. Type 1 subfamily.

It localises to the secreted. Functionally, antibacterial peptide mostly active against Gram-positive bacteria. The protein is Defensin of Formica aquilonia (Red wood ant).